Consider the following 155-residue polypeptide: Deoxyuridine 5'-triphosphate nucleotidohydrolase (155 aa).

Substrate-binding positions include 74 to 76 (RSG), asparagine 87, and 91 to 93 (LID).

This sequence belongs to the dUTPase family. Requires Mg(2+) as cofactor.

It catalyses the reaction dUTP + H2O = dUMP + diphosphate + H(+). Its pathway is pyrimidine metabolism; dUMP biosynthesis; dUMP from dCTP (dUTP route): step 2/2. In terms of biological role, this enzyme is involved in nucleotide metabolism: it produces dUMP, the immediate precursor of thymidine nucleotides and it decreases the intracellular concentration of dUTP so that uracil cannot be incorporated into DNA. The sequence is that of Deoxyuridine 5'-triphosphate nucleotidohydrolase from Xanthomonas axonopodis pv. citri (strain 306).